Reading from the N-terminus, the 110-residue chain is Large ribosomal subunit protein uL22 (110 aa).

Belongs to the universal ribosomal protein uL22 family. As to quaternary structure, part of the 50S ribosomal subunit.

Its function is as follows. This protein binds specifically to 23S rRNA; its binding is stimulated by other ribosomal proteins, e.g. L4, L17, and L20. It is important during the early stages of 50S assembly. It makes multiple contacts with different domains of the 23S rRNA in the assembled 50S subunit and ribosome. Functionally, the globular domain of the protein is located near the polypeptide exit tunnel on the outside of the subunit, while an extended beta-hairpin is found that lines the wall of the exit tunnel in the center of the 70S ribosome. This is Large ribosomal subunit protein uL22 from Exiguobacterium sibiricum (strain DSM 17290 / CCUG 55495 / CIP 109462 / JCM 13490 / 255-15).